We begin with the raw amino-acid sequence, 327 residues long: Taste receptor type 2 member 102 (327 aa).

Over 1-7 (MEPVIYS) the chain is Extracellular. The chain crosses the membrane as a helical span at residues 8-28 (FATLLIHVEFIFGNLSNGFIV). Over 29–46 (LSNFWDWVIKRKLSTIDK) the chain is Cytoplasmic. Residues 47–67 (ILLTLAISRITLIWEIYTWFT) traverse the membrane as a helical segment. Topologically, residues 68–87 (SVYGPSSFAIGMKLQILYFT) are extracellular. The helical transmembrane segment at 88-108 (WILSSHFSLWFATALSIFYLL) threads the bilayer. At 109–124 (RIANCSWKIFLYLKWR) the chain is on the cytoplasmic side. The helical transmembrane segment at 125–145 (LKQVIVGMLLASLVFLPGILT) threads the bilayer. At 146 to 179 (QRTLEERPYRYGGNTSEDSMETDFARFTELILFN) the chain is on the extracellular side. 2 N-linked (GlcNAc...) asparagine glycosylation sites follow: Asn159 and Asn179. A helical membrane pass occupies residues 180–200 (LTIFSVIPFSLASISFLLLIF). Over 201–229 (SLWKHLRKMQLSSRGHGDPSTKAHTNALR) the chain is Cytoplasmic. The chain crosses the membrane as a helical span at residues 230-250 (IMVSFLLLYSIYFLSLLLSWI). Residues 251–260 (AQKHHSKLVD) are Extracellular-facing. The chain crosses the membrane as a helical span at residues 261–281 (IIGIITGLMYPSAHSFILILG). Residues 282 to 327 (NSKLMQTSLWILSHLRCRLKGENILNPSGNQVTSCYIFCIANKSVS) are Cytoplasmic-facing.

This sequence belongs to the G-protein coupled receptor T2R family.

The protein localises to the membrane. Putative taste receptor which may play a role in the perception of bitterness. This chain is Taste receptor type 2 member 102, found in Rattus norvegicus (Rat).